Consider the following 325-residue polypeptide: UPF0285 protein MmarC7_1666 (325 aa).

It belongs to the UPF0285 family.

The protein is UPF0285 protein MmarC7_1666 of Methanococcus maripaludis (strain C7 / ATCC BAA-1331).